The primary structure comprises 201 residues: MTDSTNNQGTSGRPDDDHTTEEVASVFNDPGAQAPAGEPDPFVVLENLQLENAGLKDKVLRTYADMENLRRRSEKEVADAKLYGVTSFARDMLTFADNLHRAIESLPAEAKQAVDGPLKTFVEGIELTERDFLSRLAKYGVKKIEPLGNKFDPNLHEALFEIPDESVVSGTVKQVVEDGYVIGERVLRPAKVGVSRGGPKA.

Residues 1–11 (MTDSTNNQGTS) show a composition bias toward polar residues. The tract at residues 1–40 (MTDSTNNQGTSGRPDDDHTTEEVASVFNDPGAQAPAGEPD) is disordered.

This sequence belongs to the GrpE family. Homodimer.

The protein localises to the cytoplasm. Functionally, participates actively in the response to hyperosmotic and heat shock by preventing the aggregation of stress-denatured proteins, in association with DnaK and GrpE. It is the nucleotide exchange factor for DnaK and may function as a thermosensor. Unfolded proteins bind initially to DnaJ; upon interaction with the DnaJ-bound protein, DnaK hydrolyzes its bound ATP, resulting in the formation of a stable complex. GrpE releases ADP from DnaK; ATP binding to DnaK triggers the release of the substrate protein, thus completing the reaction cycle. Several rounds of ATP-dependent interactions between DnaJ, DnaK and GrpE are required for fully efficient folding. This is Protein GrpE from Beijerinckia indica subsp. indica (strain ATCC 9039 / DSM 1715 / NCIMB 8712).